Reading from the N-terminus, the 194-residue chain is Small ribosomal subunit protein uS4c (194 aa).

The interval 1-29 (RFKKIRRLGTLPGLTSKRPRSGSDLKNPL) is disordered. The region spanning 82–143 (MRLDNILFRL…KQRSKALIQN (62 aa)) is the S4 RNA-binding domain.

The protein belongs to the universal ribosomal protein uS4 family. Part of the 30S ribosomal subunit. Contacts protein S5. The interaction surface between S4 and S5 is involved in control of translational fidelity.

It is found in the plastid. Its subcellular location is the chloroplast. Functionally, one of the primary rRNA binding proteins, it binds directly to 16S rRNA where it nucleates assembly of the body of the 30S subunit. In terms of biological role, with S5 and S12 plays an important role in translational accuracy. The chain is Small ribosomal subunit protein uS4c (rps4) from Furcraea foetida (Mauritius hemp).